The sequence spans 359 residues: Quinolinate synthase (359 aa).

Iminosuccinate contacts are provided by His81 and Ser99. Cys144 provides a ligand contact to [4Fe-4S] cluster. Residues 170-172 and Ser187 contribute to the iminosuccinate site; that span reads YVN. Cys229 is a binding site for [4Fe-4S] cluster. Iminosuccinate-binding positions include 255 to 257 and Thr272; that span reads HPE. Residue Cys315 participates in [4Fe-4S] cluster binding.

Belongs to the quinolinate synthase family. Type 2 subfamily. It depends on [4Fe-4S] cluster as a cofactor.

The protein localises to the cytoplasm. The enzyme catalyses iminosuccinate + dihydroxyacetone phosphate = quinolinate + phosphate + 2 H2O + H(+). It functions in the pathway cofactor biosynthesis; NAD(+) biosynthesis; quinolinate from iminoaspartate: step 1/1. In terms of biological role, catalyzes the condensation of iminoaspartate with dihydroxyacetone phosphate to form quinolinate. The sequence is that of Quinolinate synthase from Sinorhizobium medicae (strain WSM419) (Ensifer medicae).